The primary structure comprises 232 residues: Protein fmp52-1, mitochondrial (232 aa).

Residues 1 to 36 constitute a mitochondrion transit peptide; sequence MASVALIGCTGMVGSHILTSLLAHPSVARVDTISRR.

The protein belongs to the FMP52 family.

Its subcellular location is the mitochondrion outer membrane. In Aspergillus terreus (strain NIH 2624 / FGSC A1156), this protein is Protein fmp52-1, mitochondrial (fmp521).